The sequence spans 125 residues: Large ribosomal subunit protein bL12 (125 aa).

Belongs to the bacterial ribosomal protein bL12 family. In terms of assembly, homodimer. Part of the ribosomal stalk of the 50S ribosomal subunit. Forms a multimeric L10(L12)X complex, where L10 forms an elongated spine to which 2 to 4 L12 dimers bind in a sequential fashion. Binds GTP-bound translation factors.

Functionally, forms part of the ribosomal stalk which helps the ribosome interact with GTP-bound translation factors. Is thus essential for accurate translation. The sequence is that of Large ribosomal subunit protein bL12 from Variovorax paradoxus (strain S110).